A 113-amino-acid polypeptide reads, in one-letter code: TYRO protein tyrosine kinase-binding protein (113 aa).

The first 21 residues, 1–21, serve as a signal peptide directing secretion; it reads MGGLEPCSRLLLLPLLLAVSG. Over 22 to 40 the chain is Extracellular; the sequence is LRPVQAQAQSDCSCSTVSP. The chain crosses the membrane as a helical span at residues 41–61; that stretch reads GVLAGIVMGDLVLTVLIALAV. Residue Asp-50 participates in Ca(2+) binding. Residues 62–113 lie on the Cytoplasmic side of the membrane; that stretch reads YFLGRLVPRGRGAAEAATRKQRITETESPYQELQGQRSDVYSDLNTQRPYYK. The disordered stretch occupies residues 75–113; that stretch reads AEAATRKQRITETESPYQELQGQRSDVYSDLNTQRPYYK. Residues 80 to 108 enclose the ITAM domain; the sequence is RKQRITETESPYQELQGQRSDVYSDLNTQ. The segment covering 87–113 has biased composition (polar residues); that stretch reads TESPYQELQGQRSDVYSDLNTQRPYYK. Phosphotyrosine occurs at positions 91 and 102.

Belongs to the TYROBP family. Homodimer; disulfide-linked. Homotrimer; disulfide-linked. Homotetramer; disulfide-linked. Homotrimers and homotetramers form when low levels of partner receptors are available and are competitive with assembly with interacting receptors. They may represent alternative oligomerization states or may be intermediates in the receptor assembly process. Binding of a metal cation aids in homooligomerization through coordination of the metal ion by the subunits of the oligomer. Interacts with TREM1. Interacts with TREM2. Interacts with SIRPB1. Interacts with CLECSF5. Interacts with SIGLEC14. Interacts with CD300LB and CD300E. Interacts with CD300C2. Interacts (via ITAM domain) with SYK (via SH2 domains); activates SYK mediating neutrophil and macrophage integrin-mediated activation. Interacts with KLRC2, KIR2DS3 and KIR2DS5. Interacts with CD300H. Interacts with KIR2DS1. Interacts with KLRD1. Interacts with SIGLEC1. In terms of processing, following ligand binding by associated receptors, tyrosine phosphorylated in the ITAM domain which leads to activation of additional tyrosine kinases and subsequent cell activation. As to expression, expressed at low levels in the early development of the hematopoietic system and in the promonocytic stage and at high levels in mature monocytes. Expressed in hematological cells and tissues such as peripheral blood leukocytes and spleen. Also found in bone marrow, lymph nodes, placenta, lung and liver. Expressed at lower levels in different parts of the brain especially in the basal ganglia and corpus callosum.

The protein localises to the cell membrane. In terms of biological role, adapter protein which non-covalently associates with activating receptors found on the surface of a variety of immune cells to mediate signaling and cell activation following ligand binding by the receptors. TYROBP is tyrosine-phosphorylated in the ITAM domain following ligand binding by the associated receptors which leads to activation of additional tyrosine kinases and subsequent cell activation. Also has an inhibitory role in some cells. Non-covalently associates with activating receptors of the CD300 family to mediate cell activation. Also mediates cell activation through association with activating receptors of the CD200R family. Required for neutrophil activation mediated by integrin. Required for the activation of myeloid cells mediated by the CLEC5A/MDL1 receptor. Associates with natural killer (NK) cell receptors such as KIR2DS2 and the KLRD1/KLRC2 heterodimer to mediate NK cell activation. Also enhances trafficking and cell surface expression of NK cell receptors KIR2DS1, KIR2DS2 and KIR2DS4 and ensures their stability at the cell surface. Associates with SIRPB1 to mediate activation of myeloid cells such as monocytes and dendritic cells. Associates with TREM1 to mediate activation of neutrophils and monocytes. Associates with TREM2 on monocyte-derived dendritic cells to mediate up-regulation of chemokine receptor CCR7 and dendritic cell maturation and survival. Association with TREM2 mediates cytokine-induced formation of multinucleated giant cells which are formed by the fusion of macrophages. Stabilizes the TREM2 C-terminal fragment (TREM2-CTF) produced by TREM2 ectodomain shedding which suppresses the release of pro-inflammatory cytokines. In microglia, required with TREM2 for phagocytosis of apoptotic neurons. Required with ITGAM/CD11B in microglia to control production of microglial superoxide ions which promote the neuronal apoptosis that occurs during brain development. Promotes pro-inflammatory responses in microglia following nerve injury which accelerates degeneration of injured neurons. Positively regulates the expression of the IRAK3/IRAK-M kinase and IL10 production by liver dendritic cells and inhibits their T cell allostimulatory ability. Negatively regulates B cell proliferation. Required for CSF1-mediated osteoclast cytoskeletal organization. Positively regulates multinucleation during osteoclast development. The sequence is that of TYRO protein tyrosine kinase-binding protein from Homo sapiens (Human).